A 91-amino-acid polypeptide reads, in one-letter code: Small ribosomal subunit protein bS18 (91 aa).

Belongs to the bacterial ribosomal protein bS18 family. As to quaternary structure, part of the 30S ribosomal subunit. Forms a tight heterodimer with protein bS6.

Functionally, binds as a heterodimer with protein bS6 to the central domain of the 16S rRNA, where it helps stabilize the platform of the 30S subunit. In Burkholderia ambifaria (strain MC40-6), this protein is Small ribosomal subunit protein bS18.